The chain runs to 406 residues: Coenzyme A biosynthesis bifunctional protein CoaBC (406 aa).

The segment at 2 to 190 (SLAGKKIVLG…SPVNDLKHLN (189 aa)) is phosphopantothenoylcysteine decarboxylase. The active-site Proton donor is the C158. The interval 191–406 (IMITAGPTRE…VTRYDEKNRR (216 aa)) is phosphopantothenate--cysteine ligase. Residues 273 to 275 (GCA), D279, K289, 308 to 311 (PDIV), F327, K341, and K345 contribute to the CTP site.

The protein in the N-terminal section; belongs to the HFCD (homo-oligomeric flavin containing Cys decarboxylase) superfamily. This sequence in the C-terminal section; belongs to the PPC synthetase family. Mg(2+) serves as cofactor. Requires FMN as cofactor.

It carries out the reaction N-[(R)-4-phosphopantothenoyl]-L-cysteine + H(+) = (R)-4'-phosphopantetheine + CO2. The catalysed reaction is (R)-4'-phosphopantothenate + L-cysteine + CTP = N-[(R)-4-phosphopantothenoyl]-L-cysteine + CMP + diphosphate + H(+). The protein operates within cofactor biosynthesis; coenzyme A biosynthesis; CoA from (R)-pantothenate: step 2/5. Its pathway is cofactor biosynthesis; coenzyme A biosynthesis; CoA from (R)-pantothenate: step 3/5. In terms of biological role, catalyzes two sequential steps in the biosynthesis of coenzyme A. In the first step cysteine is conjugated to 4'-phosphopantothenate to form 4-phosphopantothenoylcysteine. In the second step the latter compound is decarboxylated to form 4'-phosphopantotheine. This chain is Coenzyme A biosynthesis bifunctional protein CoaBC, found in Escherichia coli O6:H1 (strain CFT073 / ATCC 700928 / UPEC).